A 512-amino-acid polypeptide reads, in one-letter code: Colistin resistance protein EmrB (512 aa).

Transmembrane regions (helical) follow at residues 17–37 (WAIF…IQIV), 55–75 (VTWV…MSSI), 84–104 (VYYT…ALSW), 115–135 (IQGF…YLLF), 144–164 (LVMF…IGGW), 169–189 (FSWH…ATVI), 205–225 (SMDW…EYFL), 234–254 (LADT…MIFF), 280–300 (ITTF…PVFL), 314–334 (VMMV…WLIP), 341–361 (TVFV…HLSI), 376–396 (GIGL…TLPL), 412–432 (IGGA…TAMH), and 486–506 (FNDL…LTIF).

It belongs to the major facilitator superfamily. EmrB family.

It localises to the cell inner membrane. Its function is as follows. Probably part of an efflux pump system that contributes to adaptation to osmotic stress and resistance to colistin. This Acinetobacter baumannii (strain ATCC 17978 / DSM 105126 / CIP 53.77 / LMG 1025 / NCDC KC755 / 5377) protein is Colistin resistance protein EmrB.